The primary structure comprises 62 residues: Small ribosomal subunit protein eS31 (62 aa).

4 residues coordinate Zn(2+): Cys-29, Cys-32, Cys-48, and Cys-51. The segment at 29–51 adopts a C4-type zinc-finger fold; it reads CPRCGSFMAFHKWPVPRWHCGKC.

Belongs to the eukaryotic ribosomal protein eS31 family. In terms of assembly, part of the 30S ribosomal subunit. Zn(2+) is required as a cofactor.

The protein is Small ribosomal subunit protein eS31 of Hyperthermus butylicus (strain DSM 5456 / JCM 9403 / PLM1-5).